Reading from the N-terminus, the 331-residue chain is Ketol-acid reductoisomerase (NADP(+)) (331 aa).

In terms of domain architecture, KARI N-terminal Rossmann spans 2 to 182; it reads AQLFYDTDAD…GGTRAGILET (181 aa). Residues 25–28, serine 51, serine 53, and 83–86 contribute to the NADP(+) site; these read YGSQ and DEFQ. The active site involves histidine 108. Residue glycine 134 participates in NADP(+) binding. The KARI C-terminal knotted domain maps to 183–328; sequence NFKEETETDL…KGLRSMFSWL (146 aa). Positions 191, 195, 227, and 231 each coordinate Mg(2+). Residue serine 252 coordinates substrate.

Belongs to the ketol-acid reductoisomerase family. It depends on Mg(2+) as a cofactor.

It carries out the reaction (2R)-2,3-dihydroxy-3-methylbutanoate + NADP(+) = (2S)-2-acetolactate + NADPH + H(+). The enzyme catalyses (2R,3R)-2,3-dihydroxy-3-methylpentanoate + NADP(+) = (S)-2-ethyl-2-hydroxy-3-oxobutanoate + NADPH + H(+). Its pathway is amino-acid biosynthesis; L-isoleucine biosynthesis; L-isoleucine from 2-oxobutanoate: step 2/4. The protein operates within amino-acid biosynthesis; L-valine biosynthesis; L-valine from pyruvate: step 2/4. Its function is as follows. Involved in the biosynthesis of branched-chain amino acids (BCAA). Catalyzes an alkyl-migration followed by a ketol-acid reduction of (S)-2-acetolactate (S2AL) to yield (R)-2,3-dihydroxy-isovalerate. In the isomerase reaction, S2AL is rearranged via a Mg-dependent methyl migration to produce 3-hydroxy-3-methyl-2-ketobutyrate (HMKB). In the reductase reaction, this 2-ketoacid undergoes a metal-dependent reduction by NADPH to yield (R)-2,3-dihydroxy-isovalerate. This is Ketol-acid reductoisomerase (NADP(+)) from Synechococcus sp. (strain WH7803).